Consider the following 265-residue polypeptide: Transcriptional activator AggR (265 aa).

Residues 164-261 form the HTH araC/xylS-type domain; it reads DKVRNTIEKD…GITPKQFLTY (98 aa). DNA-binding regions (H-T-H motif) lie at residues 181–202 and 228–251; these read AIIA…ESEY and ISQI…VKHF.

As to quaternary structure, homodimer.

In terms of biological role, transcriptional activator of aggregative adherence fimbria I expression in enteroaggregative E.coli. This is Transcriptional activator AggR (aggR) from Escherichia coli.